The sequence spans 281 residues: sn-glycerol-3-phosphate transport system permease protein UgpE (281 aa).

6 helical membrane passes run 16-36, 85-105, 113-133, 142-162, 202-222, and 247-267; these read LILG…AATL, FSIT…IVWF, FFWM…FPTV, LNSY…TFLF, ALFV…LLII, and WNQV…IVLA. The ABC transmembrane type-1 domain maps to 77-268; it reads MLNSFIMAFS…IPPVVIVLAM (192 aa).

The protein belongs to the binding-protein-dependent transport system permease family. UgpAE subfamily. In terms of assembly, the complex is composed of two ATP-binding proteins (UgpC), two transmembrane proteins (UgpA and UgpE) and a solute-binding protein (UgpB).

It localises to the cell inner membrane. Part of the ABC transporter complex UgpBAEC involved in sn-glycerol-3-phosphate (G3P) import. Probably responsible for the translocation of the substrate across the membrane. This Salmonella typhi protein is sn-glycerol-3-phosphate transport system permease protein UgpE (ugpE).